Reading from the N-terminus, the 151-residue chain is Ribosomal RNA large subunit methyltransferase H (151 aa).

Residues Gly100 and 119-124 (LSKMTF) contribute to the S-adenosyl-L-methionine site.

Belongs to the RNA methyltransferase RlmH family. Homodimer.

The protein localises to the cytoplasm. The catalysed reaction is pseudouridine(1915) in 23S rRNA + S-adenosyl-L-methionine = N(3)-methylpseudouridine(1915) in 23S rRNA + S-adenosyl-L-homocysteine + H(+). Functionally, specifically methylates the pseudouridine at position 1915 (m3Psi1915) in 23S rRNA. The polypeptide is Ribosomal RNA large subunit methyltransferase H (Thermotoga maritima (strain ATCC 43589 / DSM 3109 / JCM 10099 / NBRC 100826 / MSB8)).